A 1192-amino-acid polypeptide reads, in one-letter code: DNA ligase 1 (1192 aa).

2 disordered regions span residues 29 to 257 (ELNK…KEKE) and 280 to 517 (EKEL…KSTQ). The span at 42–56 (EAVVKEKVEKKEKKE) shows a compositional bias: basic and acidic residues. Residues 70–113 (EEEEEEQEEQDGEEEQEEEEEYQQQDEEIEEDINGEEEMELDEN) show a composition bias toward acidic residues. Positions 141–155 (KTIENKETKKPEKQS) are enriched in basic and acidic residues. Acidic residues predominate over residues 172 to 198 (DDEEDEEDENKTDDNDLDDMLDDDSDN). 2 stretches are compositionally biased toward basic and acidic residues: residues 199–257 (EKDS…KEKE) and 280–368 (EKEL…RANA). Low complexity-rich tracts occupy residues 371–382 (KSSVPTSTSKNS) and 410–434 (STTT…ISSP). The segment covering 435–467 (SKKEEKEVITSKKQVEATKVEVKKEKEKEKEKE) has biased composition (basic and acidic residues). Acidic residues predominate over residues 468-511 (KEDDEEEEEEEEDDDEKLEDIDEEEYEEEEEEDEEGISENEEEE). Residues 724 to 733 (KLRIGLAERS) form an interaction with target DNA region. An ATP-binding site is contributed by Glu842. The active-site N6-AMP-lysine intermediate is the Lys844. Residues Arg849 and Arg865 each coordinate ATP. A Mg(2+)-binding site is contributed by Glu897. Positions 918 to 920 (ARK) are interaction with target DNA. Glu996 lines the Mg(2+) pocket. ATP contacts are provided by Lys1001, Arg1014, and Lys1020. The interval 1157-1192 (DKSPEDATSSDQVVDMYQNQKINSQSSKINEKDEDY) is disordered. Over residues 1162-1184 (DATSSDQVVDMYQNQKINSQSSK) the composition is skewed to polar residues.

Belongs to the ATP-dependent DNA ligase family. The cofactor is Mg(2+).

The protein resides in the nucleus. The enzyme catalyses ATP + (deoxyribonucleotide)n-3'-hydroxyl + 5'-phospho-(deoxyribonucleotide)m = (deoxyribonucleotide)n+m + AMP + diphosphate.. Its function is as follows. DNA ligase that seals nicks in double-stranded DNA during DNA replication, DNA recombination and DNA repair. This is DNA ligase 1 (lig1) from Dictyostelium discoideum (Social amoeba).